The primary structure comprises 221 residues: Molybdenum cofactor guanylyltransferase (221 aa).

GTP-binding positions include 18-20, Lys35, Asn63, Asp81, and Asp112; that span reads IAG. Mg(2+) is bound at residue Asp112.

It belongs to the MobA family. Monomer. The cofactor is Mg(2+).

Its subcellular location is the cytoplasm. The catalysed reaction is Mo-molybdopterin + GTP + H(+) = Mo-molybdopterin guanine dinucleotide + diphosphate. In terms of biological role, transfers a GMP moiety from GTP to Mo-molybdopterin (Mo-MPT) cofactor (Moco or molybdenum cofactor) to form Mo-molybdopterin guanine dinucleotide (Mo-MGD) cofactor. The chain is Molybdenum cofactor guanylyltransferase from Brucella melitensis biotype 2 (strain ATCC 23457).